Consider the following 202-residue polypeptide: Small ribosomal subunit protein uS2 (202 aa).

This sequence belongs to the universal ribosomal protein uS2 family.

The sequence is that of Small ribosomal subunit protein uS2 from Methanocorpusculum labreanum (strain ATCC 43576 / DSM 4855 / Z).